A 367-amino-acid polypeptide reads, in one-letter code: Peptide chain release factor 2 (367 aa).

An N5-methylglutamine modification is found at Gln-251.

This sequence belongs to the prokaryotic/mitochondrial release factor family. In terms of processing, methylated by PrmC. Methylation increases the termination efficiency of RF2.

The protein resides in the cytoplasm. Peptide chain release factor 2 directs the termination of translation in response to the peptide chain termination codons UGA and UAA. This Nautilia profundicola (strain ATCC BAA-1463 / DSM 18972 / AmH) protein is Peptide chain release factor 2.